Consider the following 179-residue polypeptide: ATP synthase subunit delta (179 aa).

This sequence belongs to the ATPase delta chain family. F-type ATPases have 2 components, F(1) - the catalytic core - and F(0) - the membrane proton channel. F(1) has five subunits: alpha(3), beta(3), gamma(1), delta(1), epsilon(1). F(0) has three main subunits: a(1), b(2) and c(10-14). The alpha and beta chains form an alternating ring which encloses part of the gamma chain. F(1) is attached to F(0) by a central stalk formed by the gamma and epsilon chains, while a peripheral stalk is formed by the delta and b chains.

The protein localises to the cell inner membrane. Functionally, f(1)F(0) ATP synthase produces ATP from ADP in the presence of a proton or sodium gradient. F-type ATPases consist of two structural domains, F(1) containing the extramembraneous catalytic core and F(0) containing the membrane proton channel, linked together by a central stalk and a peripheral stalk. During catalysis, ATP synthesis in the catalytic domain of F(1) is coupled via a rotary mechanism of the central stalk subunits to proton translocation. This protein is part of the stalk that links CF(0) to CF(1). It either transmits conformational changes from CF(0) to CF(1) or is implicated in proton conduction. The sequence is that of ATP synthase subunit delta from Bordetella avium (strain 197N).